Consider the following 745-residue polypeptide: VCP-like ATPase (745 aa).

ATP is bound by residues 231-238 (GPPGTGKT) and 508-515 (GPPGVGKT).

This sequence belongs to the AAA ATPase family. CDC48 subfamily. As to quaternary structure, homohexamer. Forms a ring-shaped particle.

The sequence is that of VCP-like ATPase (vat) from Thermoplasma acidophilum (strain ATCC 25905 / DSM 1728 / JCM 9062 / NBRC 15155 / AMRC-C165).